We begin with the raw amino-acid sequence, 292 residues long: Brix domain-containing protein ZK795.3 (292 aa).

The Brix domain maps to 78–259 (PKIVITTSRD…PYQIKLGTLE (182 aa)).

The polypeptide is Brix domain-containing protein ZK795.3 (Caenorhabditis elegans).